We begin with the raw amino-acid sequence, 611 residues long: Protein decapping 5 (611 aa).

The region spanning 9-92 (KSSSAADSYV…IKDLQVKASP (84 aa)) is the Sm domain. Disordered stretches follow at residues 111–153 (HYPS…AMPL), 183–238 (GLPQ…PSSL), 264–301 (SSSLQSTLQSAPSPSLASEMAPPLLSNKAPITAPPTLP), 318–362 (EAST…DKPK), 396–455 (QVSS…AGRS), and 519–611 (FFDS…NRTT). Composition is skewed to polar residues over residues 117–140 (PTSGSLPSTASGSLPDISSHNGQP) and 203–214 (NSLQQPLQYPNF). Residues 264–281 (SSSLQSTLQSAPSPSLAS) are compositionally biased toward low complexity. 3 stretches are compositionally biased toward polar residues: residues 318–330 (EASTGLPLSNKPS), 396–413 (QVSSSAGLEQSVPVTSEA), and 424–437 (ARPTQKPNGHSFPN). The span at 441-453 (YRGRGRGRGRGAG) shows a compositional bias: basic residues. The DFDF domain maps to 453–489 (GRSHQVMKFTEDFDFTAMNEKFNKDEVWGHLGKSTTL). An FFD box motif is present at residues 512–527 (PVYNKDDFFDSLSSNT). The segment covering 528-547 (IDRESQNSRPRFSEQRKLDT) has biased composition (basic and acidic residues). Residues 534–554 (NSRPRFSEQRKLDTETFGEFS) carry the TFG box motif. Over residues 559–604 (GRGGRGGYGRNNGYSRGGYGGRGYGGYGGRGGGGGGYGYGGRGQGR) the composition is skewed to gly residues.

Belongs to the LSM14 family. As to quaternary structure, homodimer. Component of the decapping complex. Interacts with DCP1 and DCP2.

It localises to the cytoplasm. It is found in the P-body. Functionally, as a component of the decapping complex, involved in the degradation of mRNAs. Promotes P-body formation. Translational repressor. The protein is Protein decapping 5 (DCP5) of Arabidopsis thaliana (Mouse-ear cress).